The primary structure comprises 101 residues: Chaperone modulatory protein CbpM (101 aa).

This sequence belongs to the CbpM family.

Functionally, interacts with CbpA and inhibits both the DnaJ-like co-chaperone activity and the DNA binding activity of CbpA. Together with CbpA, modulates the activity of the DnaK chaperone system. Does not inhibit the co-chaperone activity of DnaJ. The polypeptide is Chaperone modulatory protein CbpM (Salmonella agona (strain SL483)).